Here is a 386-residue protein sequence, read N- to C-terminus: AVLMDLEPGTMDSVRTGPYGQIFRPDNFVFGQSGAGNNWAKGHYTEGAELIDSVLDVVRKEAENCDCLQGFQVCHSLGGGTGSGMGTLLISKIREEYPDRMMLTFSVFPSPKVSDTVVEPYNATLSVHQLVENADECMVLDNEALYDICFRTLKLTTPSFGDLNHLISATMSGVTCCLRFPGQLNSDLRKLAVNLIPFPRLHFFMVGFAPLTSRGSQQYRALTVPELTQQMWDSKNMMCAADPRHGRYLTASAMFRGKMSTKEVDEQMINVQNKNSSYFVEWIPNNVKSSVCDIPPTGLSMASTFIGNSTSIQEMFRRVSEQFTAMFRRKAFLHWYTGEGMDEMEFTEAESNMNDLVSEYQQYQDATADEEGEYEDEEEDLQAEDM.

Glu7, Ser76, Gly80, Thr81, Gly82, Asn142, and Asn164 together coordinate GTP. Glu7 contributes to the Mg(2+) binding site. Positions 363–386 (YQDATADEEGEYEDEEEDLQAEDM) are disordered. The segment covering 367–386 (TADEEGEYEDEEEDLQAEDM) has biased composition (acidic residues).

This sequence belongs to the tubulin family. Dimer of alpha and beta chains. A typical microtubule is a hollow water-filled tube with an outer diameter of 25 nm and an inner diameter of 15 nM. Alpha-beta heterodimers associate head-to-tail to form protofilaments running lengthwise along the microtubule wall with the beta-tubulin subunit facing the microtubule plus end conferring a structural polarity. Microtubules usually have 13 protofilaments but different protofilament numbers can be found in some organisms and specialized cells. Requires Mg(2+) as cofactor.

Its subcellular location is the cytoplasm. The protein localises to the cytoskeleton. Its function is as follows. Tubulin is the major constituent of microtubules, a cylinder consisting of laterally associated linear protofilaments composed of alpha- and beta-tubulin heterodimers. Microtubules grow by the addition of GTP-tubulin dimers to the microtubule end, where a stabilizing cap forms. Below the cap, tubulin dimers are in GDP-bound state, owing to GTPase activity of alpha-tubulin. This is Tubulin beta-1 chain (TUBB1) from Avena sativa (Oat).